The chain runs to 264 residues: Protein Saci_1508 (264 aa).

Belongs to the CinA family.

The sequence is that of Protein Saci_1508 from Sulfolobus acidocaldarius (strain ATCC 33909 / DSM 639 / JCM 8929 / NBRC 15157 / NCIMB 11770).